Consider the following 397-residue polypeptide: Izumo sperm-egg fusion protein 1 (397 aa).

Residues 1–21 (MGPHFTLLLAALANCLCPGRP) form the signal peptide. Cystine bridges form between C22/C149, C25/C152, C135/C159, C139/C165, and C182/C233. Residues 22 to 319 (CIKCDQFVTD…QNPEKKMKTR (298 aa)) are Extracellular-facing. The tract at residues 148–160 (WCLKCEKQLHICR) is important for interaction with IZUMO1R. The Ig-like C2-type domain occupies 167–251 (ERHIEVHRSE…HATVIRYDVT (85 aa)). N204 carries an N-linked (GlcNAc...) asparagine glycan. Residues 271–292 (EHETPVHVTPQTPPGQEPESEL) are disordered. The chain crosses the membrane as a helical span at residues 320-340 (LLILLTLGFVVLVASIIISVL). At 341-397 (HFRKVSAKLKNASDEVKPTASGSKSDQSLSQQMGLKKASQADFNSDYSGDKSEATEN) the chain is on the cytoplasmic side. Residues 351 to 397 (NASDEVKPTASGSKSDQSLSQQMGLKKASQADFNSDYSGDKSEATEN) are disordered. A compositionally biased stretch (polar residues) spans 360 to 373 (ASGSKSDQSLSQQM). S379 carries the post-translational modification Phosphoserine. Residues 388 to 397 (SGDKSEATEN) are compositionally biased toward basic and acidic residues.

Belongs to the Izumo family. Monomer, homodimer; disulfide-linked and homooligomer; depending on the context. Interacts with IZUMO1R/JUNO. IZUMO1 and IZUMO1R/JUNO form a complex with 1:1 stoichiometry. In gamete recognition, IZUMO1R/JUNO first binds to monomeric IZUMO1. The weak, but specific interaction with IZUMO1R/JUNO induces IZUMO1 homodimerization. The process follows a tight binding phase where IZUMO1 bends the entire structure towards the sperm membrane side through a thiol-disulfide exchange reaction. The molecule no longer binds to IZUMO1R/JUNO and instead binds to a putative second oocyte receptor. Interacts with ACE3. Part of a oolemmal binding multimeric complex (IZUMO1 complex) composed at least of IZUMO1 and GLIPR1L1; the complex assemblage is influenced by the maturation status of the male germ cell. Interacts with GLIPR1L1. Interacts with FREY; the interaction retains IZUMO1 at the endoplasmic reticulum membrane and coordinates IZUMO1 complex assembly. Interacts with WDR54. Forms a complex with SPACA6 and TMEM81 on spermatocyte cell membrane. N-glycosylated. Glycosylation is not essential for fusion and for proper protein trafficking in sperm. Post-translationally, phosphorylated. The cytoplasmic C-terminus is phosphorylated and undergoes phosphorylation changes during epididymal transit. In terms of tissue distribution, sperm-specific (at protein level). Detectable on sperm surface only after the acrosome reaction. Expressed in spermatozoa, more abundantly expressed in the head than the tail (at protein level).

Its subcellular location is the cell membrane. It localises to the cytoplasmic vesicle. The protein localises to the secretory vesicle. The protein resides in the acrosome membrane. In terms of biological role, essential sperm cell-surface protein required for fertilization by acting as a ligand for IZUMO1R/JUNO receptor on egg. The IZUMO1:IZUMO1R/JUNO interaction is a necessary adhesion event between sperm and egg that is required for fertilization but is not sufficient for cell fusion. The ligand-receptor interaction probably does not act as a membrane 'fusogen'. Plays a critical role in sperm-oolemma binding prior to plasma membrane fusion. Can mediate cell-cell fusion in cultured mammalian cells independently of its binding to IZUMO1R/JUNO. The protein is Izumo sperm-egg fusion protein 1 of Mus musculus (Mouse).